Consider the following 231-residue polypeptide: Large ribosomal subunit protein uL1 (231 aa).

This sequence belongs to the universal ribosomal protein uL1 family. As to quaternary structure, part of the 50S ribosomal subunit.

In terms of biological role, binds directly to 23S rRNA. The L1 stalk is quite mobile in the ribosome, and is involved in E site tRNA release. Protein L1 is also a translational repressor protein, it controls the translation of the L11 operon by binding to its mRNA. In Staphylococcus carnosus (strain TM300), this protein is Large ribosomal subunit protein uL1.